A 465-amino-acid polypeptide reads, in one-letter code: GTPase Der (465 aa).

EngA-type G domains are found at residues 3–167 and 179–352; these read PLVA…PEEG and VRIA…ASAT. Residues 9 to 16, 57 to 61, 119 to 122, 185 to 192, 232 to 236, and 297 to 300 each bind GTP; these read GRPNVGKS, DTGGI, NKID, DTAGL, and NKWD. Residues 353-437 form the KH-like domain; it reads HEFSTSEVNQ…PVRFIFREGA (85 aa).

It belongs to the TRAFAC class TrmE-Era-EngA-EngB-Septin-like GTPase superfamily. EngA (Der) GTPase family. In terms of assembly, associates with the 50S ribosomal subunit.

In terms of biological role, GTPase that plays an essential role in the late steps of ribosome biogenesis. The sequence is that of GTPase Der from Xanthomonas axonopodis pv. citri (strain 306).